Here is a 933-residue protein sequence, read N- to C-terminus: Phosphoenolpyruvate carboxylase (933 aa).

Catalysis depends on residues histidine 158 and lysine 592.

The protein belongs to the PEPCase type 1 family. Mg(2+) is required as a cofactor.

It carries out the reaction oxaloacetate + phosphate = phosphoenolpyruvate + hydrogencarbonate. In terms of biological role, forms oxaloacetate, a four-carbon dicarboxylic acid source for the tricarboxylic acid cycle. This is Phosphoenolpyruvate carboxylase from Nitrosomonas eutropha (strain DSM 101675 / C91 / Nm57).